Here is a 664-residue protein sequence, read N- to C-terminus: Probable L-type lectin-domain containing receptor kinase V.3 (664 aa).

Residues 1–26 (MSMSCKINWLMVLVIIALSNLESSLG) form the signal peptide. Over 27-278 (RLVFEGSAGL…YPKAESQVKL (252 aa)) the chain is Extracellular. The tract at residues 28–250 (LVFEGSAGLM…AIHYMWMWYV (223 aa)) is legume-lectin like. 5 N-linked (GlcNAc...) asparagine glycosylation sites follow: asparagine 69, asparagine 116, asparagine 122, asparagine 174, and asparagine 197. The chain crosses the membrane as a helical span at residues 279-299 (IVLVTFLTLALFVALAASALI). Over 300–664 (VFFYKRHKKL…LPSGRPRLFL (365 aa)) the chain is Cytoplasmic. The 283-residue stretch at 335–617 (NGFKQLLGEG…GVSELPDNLL (283 aa)) folds into the Protein kinase domain. ATP contacts are provided by residues 341-349 (LGEGGFGPV) and lysine 364. Catalysis depends on aspartate 461, which acts as the Proton acceptor.

It in the C-terminal section; belongs to the protein kinase superfamily. Ser/Thr protein kinase family. The protein in the N-terminal section; belongs to the leguminous lectin family.

It localises to the cell membrane. The enzyme catalyses L-seryl-[protein] + ATP = O-phospho-L-seryl-[protein] + ADP + H(+). It catalyses the reaction L-threonyl-[protein] + ATP = O-phospho-L-threonyl-[protein] + ADP + H(+). The protein is Probable L-type lectin-domain containing receptor kinase V.3 (LECRK53) of Arabidopsis thaliana (Mouse-ear cress).